A 415-amino-acid polypeptide reads, in one-letter code: Serine hydroxymethyltransferase (415 aa).

(6S)-5,6,7,8-tetrahydrofolate is bound by residues leucine 117 and 121-123 (GHL). Lysine 226 is modified (N6-(pyridoxal phosphate)lysine).

This sequence belongs to the SHMT family. In terms of assembly, homodimer. Pyridoxal 5'-phosphate serves as cofactor.

It is found in the cytoplasm. It carries out the reaction (6R)-5,10-methylene-5,6,7,8-tetrahydrofolate + glycine + H2O = (6S)-5,6,7,8-tetrahydrofolate + L-serine. Its pathway is one-carbon metabolism; tetrahydrofolate interconversion. It functions in the pathway amino-acid biosynthesis; glycine biosynthesis; glycine from L-serine: step 1/1. Functionally, catalyzes the reversible interconversion of serine and glycine with tetrahydrofolate (THF) serving as the one-carbon carrier. This reaction serves as the major source of one-carbon groups required for the biosynthesis of purines, thymidylate, methionine, and other important biomolecules. Also exhibits THF-independent aldolase activity toward beta-hydroxyamino acids, producing glycine and aldehydes, via a retro-aldol mechanism. This Dehalococcoides mccartyi (strain ATCC BAA-2266 / KCTC 15142 / 195) (Dehalococcoides ethenogenes (strain 195)) protein is Serine hydroxymethyltransferase.